Consider the following 198-residue polypeptide: dITP/XTP pyrophosphatase (198 aa).

8-13 is a binding site for substrate; sequence TKNKGK. The active-site Proton acceptor is Asp69. Asp69 contacts Mg(2+). Substrate contacts are provided by residues Ser70, 152 to 155, Lys175, and 180 to 181; these read FGYD and HR.

It belongs to the HAM1 NTPase family. As to quaternary structure, homodimer. It depends on Mg(2+) as a cofactor.

The enzyme catalyses XTP + H2O = XMP + diphosphate + H(+). It catalyses the reaction dITP + H2O = dIMP + diphosphate + H(+). It carries out the reaction ITP + H2O = IMP + diphosphate + H(+). Functionally, pyrophosphatase that catalyzes the hydrolysis of nucleoside triphosphates to their monophosphate derivatives, with a high preference for the non-canonical purine nucleotides XTP (xanthosine triphosphate), dITP (deoxyinosine triphosphate) and ITP. Seems to function as a house-cleaning enzyme that removes non-canonical purine nucleotides from the nucleotide pool, thus preventing their incorporation into DNA/RNA and avoiding chromosomal lesions. The chain is dITP/XTP pyrophosphatase from Shouchella clausii (strain KSM-K16) (Alkalihalobacillus clausii).